A 184-amino-acid polypeptide reads, in one-letter code: Photosystem I assembly protein Ycf4 (184 aa).

The next 2 membrane-spanning stretches (helical) occupy residues 22–42 and 64–84; these read FCWACILLLGSLGFLLVGISS and IVMSFYGIAGLFISSYLWSTI.

Belongs to the Ycf4 family.

Its subcellular location is the plastid. The protein localises to the chloroplast thylakoid membrane. Its function is as follows. Seems to be required for the assembly of the photosystem I complex. This is Photosystem I assembly protein Ycf4 from Piper cenocladum (Ant piper).